Consider the following 151-residue polypeptide: 3-hydroxyacyl-[acyl-carrier-protein] dehydratase FabZ (151 aa).

The active site involves His54.

It belongs to the thioester dehydratase family. FabZ subfamily.

It is found in the cytoplasm. The catalysed reaction is a (3R)-hydroxyacyl-[ACP] = a (2E)-enoyl-[ACP] + H2O. Involved in unsaturated fatty acids biosynthesis. Catalyzes the dehydration of short chain beta-hydroxyacyl-ACPs and long chain saturated and unsaturated beta-hydroxyacyl-ACPs. This is 3-hydroxyacyl-[acyl-carrier-protein] dehydratase FabZ from Idiomarina loihiensis (strain ATCC BAA-735 / DSM 15497 / L2-TR).